The chain runs to 444 residues: Phosphoglucosamine mutase (444 aa).

S102 serves as the catalytic Phosphoserine intermediate. Mg(2+) contacts are provided by S102, D241, D243, and D245. Position 102 is a phosphoserine (S102).

The protein belongs to the phosphohexose mutase family. Requires Mg(2+) as cofactor. Activated by phosphorylation.

The enzyme catalyses alpha-D-glucosamine 1-phosphate = D-glucosamine 6-phosphate. In terms of biological role, catalyzes the conversion of glucosamine-6-phosphate to glucosamine-1-phosphate. This Histophilus somni (strain 129Pt) (Haemophilus somnus) protein is Phosphoglucosamine mutase.